The primary structure comprises 256 residues: MNFIDERFERLKKEGKKAFIGYVTFGYPTFEETLWFIKLVYSYVDILEIGFPFSDPIADGEIIQKASIKALSEGVKLSHLFESIEKFKKDKPVVLMLYANTVYKRGIDRFFESCKACGVDGVIIPDVSFEESFEFKEVAEKFGIVYIDLVSISSLERAKMIGRQSRGFLYCVSRKGVTGFKGQIDDRIFTFLKELKTVTSTPLAVGFGIKSKEDVQKFKDLADGIVIGSAIITKIDEGKDKLEDFLKEISESLKDK.

Active-site proton acceptor residues include glutamate 48 and aspartate 59.

The protein belongs to the TrpA family. As to quaternary structure, tetramer of two alpha and two beta chains.

It catalyses the reaction (1S,2R)-1-C-(indol-3-yl)glycerol 3-phosphate + L-serine = D-glyceraldehyde 3-phosphate + L-tryptophan + H2O. Its pathway is amino-acid biosynthesis; L-tryptophan biosynthesis; L-tryptophan from chorismate: step 5/5. The alpha subunit is responsible for the aldol cleavage of indoleglycerol phosphate to indole and glyceraldehyde 3-phosphate. This is Tryptophan synthase alpha chain from Caldicellulosiruptor bescii (strain ATCC BAA-1888 / DSM 6725 / KCTC 15123 / Z-1320) (Anaerocellum thermophilum).